A 204-amino-acid chain; its full sequence is MANPIKIGIGGPVGAGKTQLIEKVVKRLSKEMSIGVITNDIYTKEDEKILVNSGVLPESRIIGVETGGCPHTAIREDASMNFAAIDELLERHDDIELIFIESGGDNLAATFSPELVDFSIYIIDVAQGEKIPRKGGQGMIKSDFFVINKTDLAPYVGASLEQMAEDTKVFRDKRPFTFTNLKTDEGLDEVIDWIKRDTLLKGLS.

Residue Gly11–Thr18 coordinates GTP.

This sequence belongs to the SIMIBI class G3E GTPase family. UreG subfamily. Homodimer. UreD, UreF and UreG form a complex that acts as a GTP-hydrolysis-dependent molecular chaperone, activating the urease apoprotein by helping to assemble the nickel containing metallocenter of UreC. The UreE protein probably delivers the nickel.

The protein resides in the cytoplasm. Functionally, facilitates the functional incorporation of the urease nickel metallocenter. This process requires GTP hydrolysis, probably effectuated by UreG. This Staphylococcus aureus (strain bovine RF122 / ET3-1) protein is Urease accessory protein UreG.